A 558-amino-acid polypeptide reads, in one-letter code: MSQATEFDYIIIGAGSAGNVLATRLTEDSDVSVLLLEAGGPDYRFDFRTQMPAALAYPLQGKRYNWAFETDPEPHMDNRRMECGRGKGLGGSSLINGMCYIRGNALDYDHWAKQPGLEEWDYLSCLPYFKKSETRDIGPNDYHGGDGPVSVTTPKAGNNPLYRTFIEAGKQAGYPETEDVNGYQQEGFGPMDRFVTPKGRRASTARGYLDTAKQRSNLTIETRAVTDVIEFEGKRAVGVRYEQKGQPKQARARREVLLCGGAIASPQILQRSGVGNPEWLKELGIPVVHELPGVGENLQDHLEMYIQYECKEPISLYPALKWYNQPKIGAEWLFKGTGVGASNQFESCGFIRSRDDEEWPNLQYHFLPIAISYNGKSAVQAHGFQAHVGSMRSESRGRIRLTSKDPHAAPSILFNYMAKEKDWEEFRDAIRLTREIIAQPAFDRYRGREISPGPDVQSDEELDNFVKQHAETAYHPCGSCRMGEGDMAVTDAQGRVHGLEGLRVVDASLFPVIPTGNLNAPTIMLAEKIADRIRGREPLPRASVDYYVANGAPAKQAS.

Position 8–37 (8–37) interacts with FAD; the sequence is DYIIIGAGSAGNVLATRLTEDSDVSVLLLE. The active-site Proton acceptor is H475.

Belongs to the GMC oxidoreductase family. Requires FAD as cofactor.

The enzyme catalyses choline + A = betaine aldehyde + AH2. The catalysed reaction is betaine aldehyde + NAD(+) + H2O = glycine betaine + NADH + 2 H(+). It participates in amine and polyamine biosynthesis; betaine biosynthesis via choline pathway; betaine aldehyde from choline (cytochrome c reductase route): step 1/1. Its function is as follows. Involved in the biosynthesis of the osmoprotectant glycine betaine. Catalyzes the oxidation of choline to betaine aldehyde and betaine aldehyde to glycine betaine at the same rate. The chain is Oxygen-dependent choline dehydrogenase from Chromohalobacter salexigens (strain ATCC BAA-138 / DSM 3043 / CIP 106854 / NCIMB 13768 / 1H11).